The sequence spans 723 residues: Preterminal protein (723 aa).

Residues 453-462 (RLPMRRRRRR) carry the Nuclear localization signal motif. Positions 457-492 (RRRRRRAPPPPPMSEELSEPEVEAFPPASPPRRSFE) are disordered. At Ser-651 the chain carries O-(5'-phospho-DNA)-serine.

The protein belongs to the adenoviridae terminal protein family. In terms of assembly, heterodimer with the polymerase; this heterodimer binds to bp 9 to 18 of the genome. Interacts with host POU2F1; POU2F1 binds to the auxiliary sequences in the inverted terminal repeats and tethers the pTP-POL heterodimer to the origin DNA thereby participating in the assembly of the pre-initiation complex (POL-TP-DBP-NFIA-POU2F1). Preterminal protein is used to replicate viral genome, upon genomic encapsidation it is processed first into iTP and finally into TP by adenovirus protease.

It is found in the host nucleus matrix. Functionally, protein covalently bound to the viral DNA that acts as a primer for viral genomic replication by DNA strand displacement. Assembles on the viral origin of replication in an initiation complex with viral polymerase, DBP, host NFIA and host POU2F1/OCT1. During initiation, the polymerase covalently couples the first dCTP with Ser-580 of pTP. The terminal protein stimulates the template activity over 20 fold compared to protein-free templates. Neo-synthesized viral genomes are linked to two preterminal proteins, one for each 5' end. These new genomes are encapsidated in the nucleus, and during capsid maturation by viral protease, preterminal protein is first cleaved into intermediary (iTP), then into mature TP. May play a role in host nuclear matrix localization of genomic DNA. This chain is Preterminal protein, found in Canis lupus familiaris (Dog).